We begin with the raw amino-acid sequence, 277 residues long: Glycerol-3-phosphate acyltransferase (277 aa).

5 helical membrane passes run Leu3–Val23, Ile55–Leu75, Pro79–Phe99, Ile111–Leu131, and Leu155–Leu175. Residues Ser207 to Glu277 form a disordered region. Positions Phe216–Lys239 are enriched in basic and acidic residues. Composition is skewed to basic residues over residues Lys240–Thr253 and Lys262–Lys271.

This sequence belongs to the PlsY family. Probably interacts with PlsX.

The protein localises to the cell inner membrane. The catalysed reaction is an acyl phosphate + sn-glycerol 3-phosphate = a 1-acyl-sn-glycero-3-phosphate + phosphate. It participates in lipid metabolism; phospholipid metabolism. Its function is as follows. Catalyzes the transfer of an acyl group from acyl-phosphate (acyl-PO(4)) to glycerol-3-phosphate (G3P) to form lysophosphatidic acid (LPA). This enzyme utilizes acyl-phosphate as fatty acyl donor, but not acyl-CoA or acyl-ACP. The chain is Glycerol-3-phosphate acyltransferase from Legionella pneumophila (strain Corby).